Here is a 158-residue protein sequence, read N- to C-terminus: Glycine/sarcosine/betaine reductase complex component A (158 aa).

Residue U44 is part of the active site. Residue U44 is a non-standard amino acid, selenocysteine.

It belongs to the GrdA family. As to quaternary structure, monomer. Component of the glycine, sarcosine and betaine reductase complexes, together with components B and C.

It catalyses the reaction acetyl phosphate + [thioredoxin]-disulfide + NH4(+) + H2O = [thioredoxin]-dithiol + glycine + phosphate + H(+). It carries out the reaction acetyl phosphate + methylamine + [thioredoxin]-disulfide + H2O = sarcosine + [thioredoxin]-dithiol + phosphate + H(+). The catalysed reaction is acetyl phosphate + trimethylamine + [thioredoxin]-disulfide + H2O = glycine betaine + [thioredoxin]-dithiol + phosphate + H(+). Its function is as follows. In the first step of glycine, betaine and sarcosine reductases, the substrate is bound to component PB via a Schiff base intermediate. Then the PB-activated substrate is nucleophilically attacked by the selenol anion of component PA to transform it to a carboxymethylated selenoether and the respective amine. By action of component PC, acetyl phosphate is formed, leaving component PA in its oxidized state. Finally component PA becomes reduced by the thioredoxin system to start a new catalytic cycle of reductive deamination. The chain is Glycine/sarcosine/betaine reductase complex component A from Alkaliphilus metalliredigens (strain QYMF).